The sequence spans 303 residues: UDP-3-O-acyl-N-acetylglucosamine deacetylase (303 aa).

H78, H237, and D241 together coordinate Zn(2+). H264 (proton donor) is an active-site residue.

It belongs to the LpxC family. It depends on Zn(2+) as a cofactor.

It carries out the reaction a UDP-3-O-[(3R)-3-hydroxyacyl]-N-acetyl-alpha-D-glucosamine + H2O = a UDP-3-O-[(3R)-3-hydroxyacyl]-alpha-D-glucosamine + acetate. Its pathway is glycolipid biosynthesis; lipid IV(A) biosynthesis; lipid IV(A) from (3R)-3-hydroxytetradecanoyl-[acyl-carrier-protein] and UDP-N-acetyl-alpha-D-glucosamine: step 2/6. Functionally, catalyzes the hydrolysis of UDP-3-O-myristoyl-N-acetylglucosamine to form UDP-3-O-myristoylglucosamine and acetate, the committed step in lipid A biosynthesis. The sequence is that of UDP-3-O-acyl-N-acetylglucosamine deacetylase from Pseudomonas fluorescens (strain ATCC BAA-477 / NRRL B-23932 / Pf-5).